Here is a 200-residue protein sequence, read N- to C-terminus: Signal peptidase complex catalytic subunit SEC11 (200 aa).

Residues 1-15 are Cytoplasmic-facing; that stretch reads MFAELAPYLSNPRQT. Residues 16–33 traverse the membrane as a helical; Signal-anchor for type II membrane protein segment; that stretch reads LAQLLNFALVLSTAFMGW. Residues 34–200 lie on the Lumenal side of the membrane; that stretch reads KALSVYTNSS…MGVMVMLQRE (167 aa). N-linked (GlcNAc...) asparagine glycosylation occurs at N41. Active-site charge relay system residues include S53 and H92. The tract at residues 101 to 134 is disordered; sequence GDGGKKSQRRLEREADKRSGPGLSSPVSHQMLTK. Basic and acidic residues predominate over residues 103–119; that stretch reads GGKKSQRRLEREADKRS. The Charge relay system role is filled by D142. Residues 186-197 are C-terminal short (CTS) helix; it reads VLLGIMGVMVML.

Belongs to the peptidase S26B family. As to quaternary structure, component of the signal peptidase complex (SPC) composed of a catalytic subunit SEC11 and three accessory subunits SPC1, SPC2 and SPC3. The complex induces a local thinning of the ER membrane which is used to measure the length of the signal peptide (SP) h-region of protein substrates. This ensures the selectivity of the complex towards h-regions shorter than 18-20 amino acids. SPC associates with the translocon complex.

It is found in the endoplasmic reticulum membrane. It catalyses the reaction Cleavage of hydrophobic, N-terminal signal or leader sequences from secreted and periplasmic proteins.. Its function is as follows. Catalytic component of the signal peptidase complex (SPC) which catalyzes the cleavage of N-terminal signal sequences from nascent proteins as they are translocated into the lumen of the endoplasmic reticulum. Specifically cleaves N-terminal signal peptides that contain a hydrophobic alpha-helix (h-region) shorter than 18-20 amino acids. This chain is Signal peptidase complex catalytic subunit SEC11 (SEC11), found in Arthroderma benhamiae (strain ATCC MYA-4681 / CBS 112371) (Trichophyton mentagrophytes).